The following is a 429-amino-acid chain: UDP-N-acetylglucosamine 1-carboxyvinyltransferase 2 (429 aa).

Phosphoenolpyruvate is bound at residue 22 to 23 (KN). Arg92 serves as a coordination point for UDP-N-acetyl-alpha-D-glucosamine. Catalysis depends on Cys116, which acts as the Proton donor. 2-(S-cysteinyl)pyruvic acid O-phosphothioketal is present on Cys116. UDP-N-acetyl-alpha-D-glucosamine contacts are provided by residues 121–125 (RPIDQ), Asp305, and Ile327.

Belongs to the EPSP synthase family. MurA subfamily.

Its subcellular location is the cytoplasm. It catalyses the reaction phosphoenolpyruvate + UDP-N-acetyl-alpha-D-glucosamine = UDP-N-acetyl-3-O-(1-carboxyvinyl)-alpha-D-glucosamine + phosphate. The protein operates within cell wall biogenesis; peptidoglycan biosynthesis. Its function is as follows. Cell wall formation. Adds enolpyruvyl to UDP-N-acetylglucosamine. This is UDP-N-acetylglucosamine 1-carboxyvinyltransferase 2 from Bacillus subtilis (strain 168).